The following is a 381-amino-acid chain: tRNA (guanine(6)-N2)-methyltransferase (381 aa).

A THUMP domain is found at 43–157 (KLIPKINYLS…FDELIVGIDT (115 aa)). S-adenosyl-L-methionine contacts are provided by residues 173-177 (HPAHL), 204-206 (SGT), Asp261, 289-290 (DA), and Asn306.

The protein belongs to the methyltransferase superfamily.

It localises to the cytoplasm. The catalysed reaction is guanosine(6) in tRNA + S-adenosyl-L-methionine = N(2)-methylguanosine(6) in tRNA + S-adenosyl-L-homocysteine + H(+). S-adenosyl-L-methionine-dependent methyltransferase that catalyzes the methylation of the guanosine nucleotide at position 6 (m2G6) in tRNA(Cys). This is tRNA (guanine(6)-N2)-methyltransferase from Methanocaldococcus jannaschii (strain ATCC 43067 / DSM 2661 / JAL-1 / JCM 10045 / NBRC 100440) (Methanococcus jannaschii).